Consider the following 363-residue polypeptide: S-adenosylmethionine:tRNA ribosyltransferase-isomerase (363 aa).

It belongs to the QueA family. Monomer.

The protein resides in the cytoplasm. It carries out the reaction 7-aminomethyl-7-carbaguanosine(34) in tRNA + S-adenosyl-L-methionine = epoxyqueuosine(34) in tRNA + adenine + L-methionine + 2 H(+). It functions in the pathway tRNA modification; tRNA-queuosine biosynthesis. Functionally, transfers and isomerizes the ribose moiety from AdoMet to the 7-aminomethyl group of 7-deazaguanine (preQ1-tRNA) to give epoxyqueuosine (oQ-tRNA). This is S-adenosylmethionine:tRNA ribosyltransferase-isomerase from Brucella anthropi (strain ATCC 49188 / DSM 6882 / CCUG 24695 / JCM 21032 / LMG 3331 / NBRC 15819 / NCTC 12168 / Alc 37) (Ochrobactrum anthropi).